The chain runs to 227 residues: Phosphoribosylformylglycinamidine synthase subunit PurQ (227 aa).

The region spanning 3-225 (FAVIVFPGSN…LKQWRETYVV (223 aa)) is the Glutamine amidotransferase type-1 domain. Cys86 acts as the Nucleophile in catalysis. Active-site residues include His194 and Glu196.

In terms of assembly, part of the FGAM synthase complex composed of 1 PurL, 1 PurQ and 2 PurS subunits.

It localises to the cytoplasm. It catalyses the reaction N(2)-formyl-N(1)-(5-phospho-beta-D-ribosyl)glycinamide + L-glutamine + ATP + H2O = 2-formamido-N(1)-(5-O-phospho-beta-D-ribosyl)acetamidine + L-glutamate + ADP + phosphate + H(+). It carries out the reaction L-glutamine + H2O = L-glutamate + NH4(+). It participates in purine metabolism; IMP biosynthesis via de novo pathway; 5-amino-1-(5-phospho-D-ribosyl)imidazole from N(2)-formyl-N(1)-(5-phospho-D-ribosyl)glycinamide: step 1/2. Functionally, part of the phosphoribosylformylglycinamidine synthase complex involved in the purines biosynthetic pathway. Catalyzes the ATP-dependent conversion of formylglycinamide ribonucleotide (FGAR) and glutamine to yield formylglycinamidine ribonucleotide (FGAM) and glutamate. The FGAM synthase complex is composed of three subunits. PurQ produces an ammonia molecule by converting glutamine to glutamate. PurL transfers the ammonia molecule to FGAR to form FGAM in an ATP-dependent manner. PurS interacts with PurQ and PurL and is thought to assist in the transfer of the ammonia molecule from PurQ to PurL. The protein is Phosphoribosylformylglycinamidine synthase subunit PurQ of Bacillus cereus (strain Q1).